Here is a 425-residue protein sequence, read N- to C-terminus: UDP-N-acetylglucosamine 1-carboxyvinyltransferase (425 aa).

22–23 (KN) is a binding site for phosphoenolpyruvate. Arg-91 serves as a coordination point for UDP-N-acetyl-alpha-D-glucosamine. The Proton donor role is filled by Cys-115. Position 115 is a 2-(S-cysteinyl)pyruvic acid O-phosphothioketal (Cys-115). UDP-N-acetyl-alpha-D-glucosamine contacts are provided by residues 120 to 124 (RPVDL), Asp-309, and Ile-331.

The protein belongs to the EPSP synthase family. MurA subfamily.

It localises to the cytoplasm. It carries out the reaction phosphoenolpyruvate + UDP-N-acetyl-alpha-D-glucosamine = UDP-N-acetyl-3-O-(1-carboxyvinyl)-alpha-D-glucosamine + phosphate. Its pathway is cell wall biogenesis; peptidoglycan biosynthesis. Functionally, cell wall formation. Adds enolpyruvyl to UDP-N-acetylglucosamine. This is UDP-N-acetylglucosamine 1-carboxyvinyltransferase from Akkermansia muciniphila (strain ATCC BAA-835 / DSM 22959 / JCM 33894 / BCRC 81048 / CCUG 64013 / CIP 107961 / Muc).